We begin with the raw amino-acid sequence, 93 residues long: Acylphosphatase (93 aa).

The region spanning 7 to 93 (RAHVFVSGTV…EGIDGFHIRR (87 aa)) is the Acylphosphatase-like domain. Residues R22 and N40 contribute to the active site.

Belongs to the acylphosphatase family.

The catalysed reaction is an acyl phosphate + H2O = a carboxylate + phosphate + H(+). The chain is Acylphosphatase (acyP) from Haloquadratum walsbyi (strain DSM 16790 / HBSQ001).